The following is a 91-amino-acid chain: DNA-directed RNA polymerase subunit omega (91 aa).

It belongs to the RNA polymerase subunit omega family. As to quaternary structure, the RNAP catalytic core consists of 2 alpha, 1 beta, 1 beta' and 1 omega subunit. When a sigma factor is associated with the core the holoenzyme is formed, which can initiate transcription.

The enzyme catalyses RNA(n) + a ribonucleoside 5'-triphosphate = RNA(n+1) + diphosphate. Its function is as follows. Promotes RNA polymerase assembly. Latches the N- and C-terminal regions of the beta' subunit thereby facilitating its interaction with the beta and alpha subunits. The protein is DNA-directed RNA polymerase subunit omega of Aeromonas hydrophila subsp. hydrophila (strain ATCC 7966 / DSM 30187 / BCRC 13018 / CCUG 14551 / JCM 1027 / KCTC 2358 / NCIMB 9240 / NCTC 8049).